A 38-amino-acid polypeptide reads, in one-letter code: Glucagon-like peptide (38 aa).

This sequence belongs to the glucagon family.

The protein resides in the secreted. The protein is Glucagon-like peptide of Hydrolagus colliei (Spotted ratfish).